We begin with the raw amino-acid sequence, 318 residues long: N-acetyl-gamma-glutamyl-phosphate reductase (318 aa).

Cys132 is a catalytic residue.

This sequence belongs to the NAGSA dehydrogenase family. Type 1 subfamily.

It localises to the cytoplasm. It catalyses the reaction N-acetyl-L-glutamate 5-semialdehyde + phosphate + NADP(+) = N-acetyl-L-glutamyl 5-phosphate + NADPH + H(+). It functions in the pathway amino-acid biosynthesis; L-arginine biosynthesis; N(2)-acetyl-L-ornithine from L-glutamate: step 3/4. In terms of biological role, catalyzes the NADPH-dependent reduction of N-acetyl-5-glutamyl phosphate to yield N-acetyl-L-glutamate 5-semialdehyde. In Azobacteroides pseudotrichonymphae genomovar. CFP2, this protein is N-acetyl-gamma-glutamyl-phosphate reductase.